The following is a 402-amino-acid chain: uncharacterized protein (402 aa).

12 consecutive transmembrane segments (helical) span residues Leu-11–Tyr-31, Leu-48–Gly-68, Leu-80–Ile-100, Phe-108–Val-125, Leu-140–Leu-160, Trp-167–Leu-187, Phe-219–Gly-239, Val-254–Gly-274, Leu-286–Ile-306, Gly-308–Leu-328, Ser-347–Ile-367, and Val-373–Leu-393.

It belongs to the major facilitator superfamily. Bcr/CmlA family.

The protein resides in the cell membrane. This is an uncharacterized protein from Bacillus subtilis (strain 168).